The chain runs to 354 residues: Nicotinate-nucleotide--dimethylbenzimidazole phosphoribosyltransferase (354 aa).

Residue Glu-317 is the Proton acceptor of the active site.

This sequence belongs to the CobT family. As to quaternary structure, homodimer.

The catalysed reaction is 5,6-dimethylbenzimidazole + nicotinate beta-D-ribonucleotide = alpha-ribazole 5'-phosphate + nicotinate + H(+). It participates in nucleoside biosynthesis; alpha-ribazole biosynthesis; alpha-ribazole from 5,6-dimethylbenzimidazole: step 1/2. Functionally, catalyzes the synthesis of alpha-ribazole-5'-phosphate from nicotinate mononucleotide (NAMN) and 5,6-dimethylbenzimidazole (DMB). The chain is Nicotinate-nucleotide--dimethylbenzimidazole phosphoribosyltransferase from Salmonella arizonae (strain ATCC BAA-731 / CDC346-86 / RSK2980).